A 282-amino-acid polypeptide reads, in one-letter code: Probable endonuclease 4 (282 aa).

Residues His66, His106, Glu143, Asp177, His180, His214, Asp227, His229, and Glu259 each coordinate Zn(2+).

This sequence belongs to the AP endonuclease 2 family. Zn(2+) serves as cofactor.

The enzyme catalyses Endonucleolytic cleavage to 5'-phosphooligonucleotide end-products.. Functionally, endonuclease IV plays a role in DNA repair. It cleaves phosphodiester bonds at apurinic or apyrimidinic (AP) sites, generating a 3'-hydroxyl group and a 5'-terminal sugar phosphate. The sequence is that of Probable endonuclease 4 from Nitratidesulfovibrio vulgaris (strain DP4) (Desulfovibrio vulgaris).